The chain runs to 108 residues: Ribonuclease P protein component 4 (108 aa).

Residues C60, C63, C86, and C89 each coordinate Zn(2+).

This sequence belongs to the eukaryotic/archaeal RNase P protein component 4 family. As to quaternary structure, consists of a catalytic RNA component and at least 4-5 protein subunits. It depends on Zn(2+) as a cofactor.

The protein localises to the cytoplasm. The enzyme catalyses Endonucleolytic cleavage of RNA, removing 5'-extranucleotides from tRNA precursor.. Functionally, part of ribonuclease P, a protein complex that generates mature tRNA molecules by cleaving their 5'-ends. This Sulfurisphaera tokodaii (strain DSM 16993 / JCM 10545 / NBRC 100140 / 7) (Sulfolobus tokodaii) protein is Ribonuclease P protein component 4.